A 132-amino-acid polypeptide reads, in one-letter code: ATP synthase epsilon chain (132 aa).

The protein belongs to the ATPase epsilon chain family. In terms of assembly, F-type ATPases have 2 components, CF(1) - the catalytic core - and CF(0) - the membrane proton channel. CF(1) has five subunits: alpha(3), beta(3), gamma(1), delta(1), epsilon(1). CF(0) has four main subunits: a, b, b' and c.

It localises to the cellular chromatophore membrane. Its function is as follows. Produces ATP from ADP in the presence of a proton gradient across the membrane. This chain is ATP synthase epsilon chain (atpC), found in Rhodobacter capsulatus (Rhodopseudomonas capsulata).